An 80-amino-acid polypeptide reads, in one-letter code: FXYD domain-containing ion transport regulator 7 (80 aa).

Over 1–22 (MATPTQSPTNVPEETDPFFYDY) the chain is Extracellular. Thr-3, Thr-5, and Thr-9 each carry an O-linked (GlcNAc) threonine glycan. A helical transmembrane segment spans residues 23–45 (ATVQTVGMTLATIMFVLGIIIIL). Topologically, residues 46 to 80 (SKKVKCRKADSRSESPTCKSCKSELPSSAPGGGGV) are cytoplasmic. The interval 55–80 (DSRSESPTCKSCKSELPSSAPGGGGV) is disordered. A Phosphoserine modification is found at Ser-73.

This sequence belongs to the FXYD family. As to quaternary structure, regulatory subunit of the sodium/potassium-transporting ATPase which is composed of a catalytic alpha subunit, a non-catalytic beta subunit and an additional regulatory subunit. The regulatory subunit, a member of the FXYD protein family, modulates the enzymatic activity in a tissue- and isoform-specific way by changing affinities of the Na+/K+-ATPase toward Na(+), K(+) or ATP. Post-translationally, O-glycosylated; required for stabilization and translocation to the plasma membrane.

It localises to the cell membrane. Functionally, associates with and regulates the activity of the sodium/potassium-transporting ATPase (NKA) which catalyzes the hydrolysis of ATP coupled with the exchange of Na(+) and K(+) ions across the plasma membrane. Reduces the apparent affinity for external K(+), an effect that depends on the presence of external Na(+) and voltage. Increases the apparent affinity for intracellular Na(+). The chain is FXYD domain-containing ion transport regulator 7 (Fxyd7) from Mus musculus (Mouse).